Reading from the N-terminus, the 251-residue chain is Putative mediator of RNA polymerase II transcription subunit 18 (251 aa).

The protein belongs to the Mediator complex subunit 18 family. Component of the Mediator complex.

The protein resides in the nucleus. Functionally, component of the Mediator complex, a coactivator involved in the regulated transcription of nearly all RNA polymerase II-dependent genes. Mediator functions as a bridge to convey information from gene-specific regulatory proteins to the basal RNA polymerase II transcription machinery. Mediator is recruited to promoters by direct interactions with regulatory proteins and serves as a scaffold for the assembly of a functional preinitiation complex with RNA polymerase II and the general transcription factors. The polypeptide is Putative mediator of RNA polymerase II transcription subunit 18 (med18) (Dictyostelium discoideum (Social amoeba)).